The chain runs to 203 residues: High-molecular weight cobalt-containing nitrile hydratase subunit alpha (203 aa).

Residues C102, C105, S106, and C107 each contribute to the Co(3+) site.

This sequence belongs to the nitrile hydratase subunit alpha family. As to quaternary structure, heterodimer of an alpha and a beta chain. It depends on Co(3+) as a cofactor.

It carries out the reaction an aliphatic primary amide = an aliphatic nitrile + H2O. Its function is as follows. NHase catalyzes the hydration of various nitrile compounds to the corresponding amides. The sequence is that of High-molecular weight cobalt-containing nitrile hydratase subunit alpha (nhhA) from Rhodococcus rhodochrous.